The following is a 94-amino-acid chain: Small ubiquitin-related modifier 3 (94 aa).

A Glycyl lysine isopeptide (Lys-Gly) (interchain with G-Cter in SUMO) cross-link involves residue lysine 11. Residues 15 to 92 (DHINLKVAGQ…IDVFQQQTGG (78 aa)) enclose the Ubiquitin-like domain. Glycine 92 is covalently cross-linked (Glycyl lysine isopeptide (Gly-Lys) (interchain with K-? in acceptor proteins)). A propeptide spanning residues 93 to 94 (LC) is cleaved from the precursor.

It belongs to the ubiquitin family. SUMO subfamily. In terms of assembly, interacts with SAE2 and UBE2I. Covalently attached to a number of proteins. In terms of processing, polymeric chains can be formed through Lys-11 cross-linking. Cleavage of precursor form by a sentrin-specific protease is necessary for function.

The protein resides in the cytoplasm. The protein localises to the nucleus. Its subcellular location is the PML body. Its function is as follows. Ubiquitin-like protein which can be covalently attached to target lysines either as a monomer or as a lysine-linked polymer. Does not seem to be involved in protein degradation and may function as an antagonist of ubiquitin in the degradation process. Plays a role in a number of cellular processes such as nuclear transport, DNA replication and repair, mitosis and signal transduction. Covalent attachment to its substrates requires prior activation by the E1 complex SAE1-SAE2 and linkage to the E2 enzyme UBE2I. This chain is Small ubiquitin-related modifier 3, found in Gallus gallus (Chicken).